A 525-amino-acid polypeptide reads, in one-letter code: Chromosomal replication initiator protein DnaA (525 aa).

Positions 1–71 are domain I, interacts with DnaA modulators; the sequence is MNDFWQHCSA…SDLAREFWNT (71 aa). Residues 71-188 are domain II; sequence TPIEVQFVLD…GEADSMYERS (118 aa). Positions 162–182 are disordered; the sequence is AGRRTWRPGPGAAPANGGEAD. A compositionally biased stretch (low complexity) spans 169–181; it reads PGPGAAPANGGEA. The domain III, AAA+ region stretch occupies residues 189–405; sequence KLNPVLTFDN…GALRKILAYS (217 aa). ATP-binding residues include G233, G235, K236, and T237. The tract at residues 406–525 is domain IV, binds dsDNA; that stretch reads KFHGREISIE…LHVLEQTLKG (120 aa).

Belongs to the DnaA family. In terms of assembly, oligomerizes as a right-handed, spiral filament on DNA at oriC.

The protein resides in the cytoplasm. Plays an essential role in the initiation and regulation of chromosomal replication. ATP-DnaA binds to the origin of replication (oriC) to initiate formation of the DNA replication initiation complex once per cell cycle. Binds the DnaA box (a 9 base pair repeat at the origin) and separates the double-stranded (ds)DNA. Forms a right-handed helical filament on oriC DNA; dsDNA binds to the exterior of the filament while single-stranded (ss)DNA is stabiized in the filament's interior. The ATP-DnaA-oriC complex binds and stabilizes one strand of the AT-rich DNA unwinding element (DUE), permitting loading of DNA polymerase. After initiation quickly degrades to an ADP-DnaA complex that is not apt for DNA replication. Binds acidic phospholipids. This is Chromosomal replication initiator protein DnaA from Burkholderia cenocepacia (strain HI2424).